A 276-amino-acid chain; its full sequence is D-aminoacyl-tRNA deacylase (276 aa).

Belongs to the DtdA deacylase family. In terms of assembly, monomer. The cofactor is Zn(2+).

It carries out the reaction a D-aminoacyl-tRNA + H2O = a tRNA + a D-alpha-amino acid + H(+). The enzyme catalyses glycyl-tRNA(Ala) + H2O = tRNA(Ala) + glycine + H(+). D-aminoacyl-tRNA deacylase with broad substrate specificity. By recycling D-aminoacyl-tRNA to D-amino acids and free tRNA molecules, this enzyme counteracts the toxicity associated with the formation of D-aminoacyl-tRNA entities in vivo. In Staphylothermus marinus (strain ATCC 43588 / DSM 3639 / JCM 9404 / F1), this protein is D-aminoacyl-tRNA deacylase.